The primary structure comprises 564 residues: Dihydroxy-acid dehydratase (564 aa).

Cys55 contacts [2Fe-2S] cluster. A Mg(2+)-binding site is contributed by Asp87. Cys128 provides a ligand contact to [2Fe-2S] cluster. 2 residues coordinate Mg(2+): Asp129 and Lys130. At Lys130 the chain carries N6-carboxylysine. Cys200 provides a ligand contact to [2Fe-2S] cluster. Glu452 lines the Mg(2+) pocket. Ser478 functions as the Proton acceptor in the catalytic mechanism.

The protein belongs to the IlvD/Edd family. In terms of assembly, homodimer. The cofactor is [2Fe-2S] cluster. Mg(2+) is required as a cofactor.

The enzyme catalyses (2R)-2,3-dihydroxy-3-methylbutanoate = 3-methyl-2-oxobutanoate + H2O. It carries out the reaction (2R,3R)-2,3-dihydroxy-3-methylpentanoate = (S)-3-methyl-2-oxopentanoate + H2O. It functions in the pathway amino-acid biosynthesis; L-isoleucine biosynthesis; L-isoleucine from 2-oxobutanoate: step 3/4. The protein operates within amino-acid biosynthesis; L-valine biosynthesis; L-valine from pyruvate: step 3/4. In terms of biological role, functions in the biosynthesis of branched-chain amino acids. Catalyzes the dehydration of (2R,3R)-2,3-dihydroxy-3-methylpentanoate (2,3-dihydroxy-3-methylvalerate) into 2-oxo-3-methylpentanoate (2-oxo-3-methylvalerate) and of (2R)-2,3-dihydroxy-3-methylbutanoate (2,3-dihydroxyisovalerate) into 2-oxo-3-methylbutanoate (2-oxoisovalerate), the penultimate precursor to L-isoleucine and L-valine, respectively. The sequence is that of Dihydroxy-acid dehydratase from Albidiferax ferrireducens (strain ATCC BAA-621 / DSM 15236 / T118) (Rhodoferax ferrireducens).